The primary structure comprises 62 residues: DNA-binding protein 7b (62 aa).

Belongs to the 7 kDa DNA-binding/endoribonuclease P2 family. In terms of assembly, monomer.

The protein localises to the cytoplasm. Functionally, can constrain negative DNA supercoils. May be involved in maintaining the integrity of the genome at high temperature. The sequence is that of DNA-binding protein 7b from Acidianus hospitalis (strain W1).